We begin with the raw amino-acid sequence, 88 residues long: Small ribosomal subunit protein uS17 (88 aa).

Belongs to the universal ribosomal protein uS17 family. Part of the 30S ribosomal subunit.

Functionally, one of the primary rRNA binding proteins, it binds specifically to the 5'-end of 16S ribosomal RNA. This chain is Small ribosomal subunit protein uS17, found in Teredinibacter turnerae (strain ATCC 39867 / T7901).